Consider the following 306-residue polypeptide: Beta-lactamase 1 (306 aa).

Residues 1 to 43 form the signal peptide; the sequence is MKNKKMLKIGMCVGILGLSITSLVTFTGGALQVEAKEKTGQVK. Catalysis depends on Ser-89, which acts as the Acyl-ester intermediate. The active-site Proton acceptor is the Glu-185. Position 251–253 (251–253) interacts with substrate; the sequence is KSG.

Belongs to the class-A beta-lactamase family.

It localises to the secreted. The enzyme catalyses a beta-lactam + H2O = a substituted beta-amino acid. Functionally, acts preferentially on penicillins. The sequence is that of Beta-lactamase 1 (penPC) from Bacillus cereus.